The chain runs to 238 residues: Adenylate dimethylallyltransferase (238 aa).

This sequence belongs to the isopentenyl transferase family.

The enzyme catalyses dimethylallyl diphosphate + AMP = N(6)-(dimethylallyl)adenosine 5'-phosphate + diphosphate. Its function is as follows. Transfers dimethylallyl groups to AMP as part of the biosynthesis of cytokinin phytohormones. This Ralstonia solanacearum (Pseudomonas solanacearum) protein is Adenylate dimethylallyltransferase (tzs).